Reading from the N-terminus, the 235-residue chain is Purine nucleoside phosphorylase DeoD-type (235 aa).

Residue His-4 participates in a purine D-ribonucleoside binding. Phosphate-binding positions include Gly-20, Arg-24, Arg-43, and 87–90 (RVGT). A purine D-ribonucleoside-binding positions include 178 to 180 (EME) and 202 to 203 (SD). Asp-203 functions as the Proton donor in the catalytic mechanism.

Belongs to the PNP/UDP phosphorylase family. Homohexamer; trimer of homodimers.

It carries out the reaction a purine D-ribonucleoside + phosphate = a purine nucleobase + alpha-D-ribose 1-phosphate. It catalyses the reaction a purine 2'-deoxy-D-ribonucleoside + phosphate = a purine nucleobase + 2-deoxy-alpha-D-ribose 1-phosphate. Its function is as follows. Catalyzes the reversible phosphorolytic breakdown of the N-glycosidic bond in the beta-(deoxy)ribonucleoside molecules, with the formation of the corresponding free purine bases and pentose-1-phosphate. In Geobacillus sp. (strain WCH70), this protein is Purine nucleoside phosphorylase DeoD-type.